Consider the following 131-residue polypeptide: Large ribosomal subunit protein bL17 (131 aa).

Belongs to the bacterial ribosomal protein bL17 family. In terms of assembly, part of the 50S ribosomal subunit. Contacts protein L32.

This chain is Large ribosomal subunit protein bL17, found in Shewanella sp. (strain ANA-3).